A 370-amino-acid polypeptide reads, in one-letter code: Adaptive-response sensory kinase SasA (370 aa).

The Histidine kinase domain maps to 152-365; the sequence is MVAHELRTPL…CFYLTVPVWQ (214 aa). Phosphohistidine; by autocatalysis is present on His155.

As to quaternary structure, homooligomerizes. Interacts with KaiC. Participates in the KaiBC complex, whose core is composed of a KaiC homohexamer and 6 KaiB.

It carries out the reaction ATP + protein L-histidine = ADP + protein N-phospho-L-histidine.. Functionally, member of the two-component regulatory system SasA/RpaA involved in genome-wide circadian gene expression. One of several clock output pathways. Participates in the Kai clock protein complex, the main circadian regulator in cyanobacteria, via its interaction with KaiC. KaiC enhances the autophosphorylation activity of SasA, which then transfers its phosphate group to RpaA to activate it. In addition to its output function, recruits fold-shifted KaiB (KaiB(fs)) to KaiC to cooperatively form the KaiB(6):KaiC(6) complex (independent of SasA kinase activity). Required for robustness of the circadian rhythm of gene expression and is involved in clock output, also required for adaptation to light/dark cycles. The chain is Adaptive-response sensory kinase SasA from Prochlorococcus marinus (strain MIT 9313).